The sequence spans 527 residues: Putative BTB/POZ domain and WD-repeat protein R783 (527 aa).

In terms of domain architecture, BTB spans 45 to 115 (TDVTIVLDDG…FYSQNTDTRN (71 aa)). WD repeat units lie at residues 215-266 (IHGD…VEAS), 272-310 (NVKTRFEHFCYLPSNNHLISTSSYNIYVWDLSTNKLIKT), 313-353 (KHKN…IVRC), 355-391 (ISPVDCICYSSSGRELVIVNKHYIKVFNVSDGTFLFK), and 436-476 (YCPS…DNKY).

The protein belongs to the mimivirus BTB/WD family.

The polypeptide is Putative BTB/POZ domain and WD-repeat protein R783 (Acanthamoeba polyphaga (Amoeba)).